A 418-amino-acid chain; its full sequence is Replication factor C large subunit (418 aa).

47-54 (GSQGTGKT) lines the ATP pocket.

The protein belongs to the activator 1 small subunits family. RfcL subfamily. Heteromultimer composed of small subunits (RfcS) and large subunits (RfcL).

In terms of biological role, part of the RFC clamp loader complex which loads the PCNA sliding clamp onto DNA. The protein is Replication factor C large subunit of Thermoplasma acidophilum (strain ATCC 25905 / DSM 1728 / JCM 9062 / NBRC 15155 / AMRC-C165).